The primary structure comprises 85 residues: ATP synthase subunit 9, mitochondrial (85 aa).

A run of 2 helical transmembrane segments spans residues 19-39 (IGAG…GNVF) and 61-81 (ILGF…AFLI).

It belongs to the ATPase C chain family. In terms of assembly, F-type ATPases have 2 components, CF(1) - the catalytic core - and CF(0) - the membrane proton channel. CF(1) has five subunits: alpha(3), beta(3), gamma(1), delta(1), epsilon(1). CF(0) has three main subunits: a, b and c.

It localises to the mitochondrion membrane. Its function is as follows. This protein is one of the chains of the nonenzymatic membrane component (F0) of mitochondrial ATPase. This chain is ATP synthase subunit 9, mitochondrial (ATP9), found in Arabidopsis thaliana (Mouse-ear cress).